Here is a 426-residue protein sequence, read N- to C-terminus: Enolase (426 aa).

Gln162 is a (2R)-2-phosphoglycerate binding site. Catalysis depends on Glu204, which acts as the Proton donor. Residues Asp241, Glu286, and Asp313 each coordinate Mg(2+). (2R)-2-phosphoglycerate contacts are provided by Lys338, Arg367, Ser368, and Lys389. Lys338 functions as the Proton acceptor in the catalytic mechanism.

This sequence belongs to the enolase family. The cofactor is Mg(2+).

The protein localises to the cytoplasm. It is found in the secreted. The protein resides in the cell surface. It catalyses the reaction (2R)-2-phosphoglycerate = phosphoenolpyruvate + H2O. It functions in the pathway carbohydrate degradation; glycolysis; pyruvate from D-glyceraldehyde 3-phosphate: step 4/5. In terms of biological role, catalyzes the reversible conversion of 2-phosphoglycerate (2-PG) into phosphoenolpyruvate (PEP). It is essential for the degradation of carbohydrates via glycolysis. This chain is Enolase, found in Aliarcobacter butzleri (strain RM4018) (Arcobacter butzleri).